Reading from the N-terminus, the 195-residue chain is Phosphoheptose isomerase (195 aa).

An SIS domain is found at 36-195 (LVDSLKGDGI…IIEKELFGLD (160 aa)). 51–53 (NGG) is a binding site for substrate. Residues histidine 60 and glutamate 64 each contribute to the Zn(2+) site. Residues glutamate 64, 95–96 (ND), 121–123 (TTS), serine 126, and glutamine 173 each bind substrate. Residues glutamine 173 and histidine 181 each contribute to the Zn(2+) site.

It belongs to the SIS family. GmhA subfamily. Zn(2+) is required as a cofactor.

The protein localises to the cytoplasm. The enzyme catalyses 2 D-sedoheptulose 7-phosphate = D-glycero-alpha-D-manno-heptose 7-phosphate + D-glycero-beta-D-manno-heptose 7-phosphate. It participates in carbohydrate biosynthesis; D-glycero-D-manno-heptose 7-phosphate biosynthesis; D-glycero-alpha-D-manno-heptose 7-phosphate and D-glycero-beta-D-manno-heptose 7-phosphate from sedoheptulose 7-phosphate: step 1/1. Catalyzes the isomerization of sedoheptulose 7-phosphate in D-glycero-D-manno-heptose 7-phosphate. This Leptospira biflexa serovar Patoc (strain Patoc 1 / Ames) protein is Phosphoheptose isomerase.